Consider the following 496-residue polypeptide: Glycogen synthase (496 aa).

K24 contributes to the ADP-alpha-D-glucose binding site.

It belongs to the glycosyltransferase 1 family. Bacterial/plant glycogen synthase subfamily.

It catalyses the reaction [(1-&gt;4)-alpha-D-glucosyl](n) + ADP-alpha-D-glucose = [(1-&gt;4)-alpha-D-glucosyl](n+1) + ADP + H(+). The protein operates within glycan biosynthesis; glycogen biosynthesis. Synthesizes alpha-1,4-glucan chains using ADP-glucose. The sequence is that of Glycogen synthase from Nitrosospira multiformis (strain ATCC 25196 / NCIMB 11849 / C 71).